An 84-amino-acid chain; its full sequence is Small ribosomal subunit protein uS17c (84 aa).

This sequence belongs to the universal ribosomal protein uS17 family. As to quaternary structure, part of the 30S ribosomal subunit.

The protein localises to the plastid. It localises to the chloroplast. One of the primary rRNA binding proteins, it binds specifically to the 5'-end of 16S ribosomal RNA. The polypeptide is Small ribosomal subunit protein uS17c (rps17) (Thalassiosira pseudonana (Marine diatom)).